The chain runs to 201 residues: Urease accessory protein UreG (201 aa).

Residue 11 to 18 (GPVGSGKT) coordinates GTP.

It belongs to the SIMIBI class G3E GTPase family. UreG subfamily. As to quaternary structure, homodimer. UreD, UreF and UreG form a complex that acts as a GTP-hydrolysis-dependent molecular chaperone, activating the urease apoprotein by helping to assemble the nickel containing metallocenter of UreC. The UreE protein probably delivers the nickel.

It is found in the cytoplasm. Its function is as follows. Facilitates the functional incorporation of the urease nickel metallocenter. This process requires GTP hydrolysis, probably effectuated by UreG. The polypeptide is Urease accessory protein UreG (Synechococcus sp. (strain CC9902)).